A 493-amino-acid chain; its full sequence is Putative trans-acting regulator SP_1800 (493 aa).

Belongs to the AtxA/AcpA family.

The sequence is that of Putative trans-acting regulator SP_1800 from Streptococcus pneumoniae serotype 4 (strain ATCC BAA-334 / TIGR4).